The following is a 114-amino-acid chain: Nucleoid-associated protein THEYE_A1069 (114 aa).

This sequence belongs to the YbaB/EbfC family. Homodimer.

The protein localises to the cytoplasm. The protein resides in the nucleoid. Its function is as follows. Binds to DNA and alters its conformation. May be involved in regulation of gene expression, nucleoid organization and DNA protection. This is Nucleoid-associated protein THEYE_A1069 from Thermodesulfovibrio yellowstonii (strain ATCC 51303 / DSM 11347 / YP87).